We begin with the raw amino-acid sequence, 99 residues long: Microcin E492 (99 aa).

The signal sequence occupies residues 1–15 (MREISQKDLNLAFGA). The disordered stretch occupies residues 80–99 (SWNGSGSGYNSATSSSGSGS). Residues 87–99 (GYNSATSSSGSGS) show a composition bias toward low complexity. A Serine microcin E492 siderophore ester modification is found at Ser-99.

This sequence belongs to the class IIa microcin family. Multimer. Possibly forms a homodimer or a homotrimer. The C-terminal Ser is modified by attachment to a siderophore similar to enterobactin, which can bind one atom of iron. The modification consists of an ester linkage of the serine carboxyl to O6 of a glucose which is linked by a C-glycosidic bond to the 5'-benzoyl of a linear triester of N-(2,3-dihydroxybenzoyl)serine. Presence of the siderophore ester increases the antibacterial activity of the protein.

Its function is as follows. Channel-forming bacteriocin. Forms cation-selective channels. Active on enterobacteria, with highest activity against E.coli. Not active on other Gram-negative bacteria, Gram-positive bacteria or fungi. The unmodified protein is active against E.coli and S.enteritidis. When the siderophore ester is present at Ser-99, antibacterial activity against these species is increased and activity is also detected against E.cloacae and K.pneumoniae. Neutralized by its immunity protein MceB. This Klebsiella pneumoniae protein is Microcin E492.